A 429-amino-acid polypeptide reads, in one-letter code: ATP-dependent RNA helicase RhlB (429 aa).

A Q motif motif is present at residues 9 to 37 (DKFAQMGLEPEVLAGLESKGFHYCTPIQA). A Helicase ATP-binding domain is found at 40–219 (LPLLVEGHDL…YEHMNHPEHV (180 aa)). 53–60 (AQTGTGKT) is a binding site for ATP. The DEAD box motif lies at 165 to 168 (DEAD). Positions 243-390 (KMLLLLSLME…VSKYDREALL (148 aa)) constitute a Helicase C-terminal domain. Positions 399-429 (VFRNRQPVNRNMRDRQGGGNSNNRRRPPRKS) are disordered.

It belongs to the DEAD box helicase family. RhlB subfamily. In terms of assembly, component of the RNA degradosome, which is a multiprotein complex involved in RNA processing and mRNA degradation.

Its subcellular location is the cytoplasm. It carries out the reaction ATP + H2O = ADP + phosphate + H(+). DEAD-box RNA helicase involved in RNA degradation. Has RNA-dependent ATPase activity and unwinds double-stranded RNA. The sequence is that of ATP-dependent RNA helicase RhlB from Aeromonas hydrophila subsp. hydrophila (strain ATCC 7966 / DSM 30187 / BCRC 13018 / CCUG 14551 / JCM 1027 / KCTC 2358 / NCIMB 9240 / NCTC 8049).